Here is a 369-residue protein sequence, read N- to C-terminus: Superinfection exclusion protein (369 aa).

A signal peptide spans 1 to 15 (MIALLILSLTCSAST).

This sequence belongs to the serpin family. Orthopoxvirus OPG040 subfamily. Interacts with A56 protein.

The protein localises to the virion membrane. The protein resides in the host cell membrane. Its function is as follows. Prevents cell to cell fusion via its interaction with A56 protein. The A56-K2 complex associates with components of the entry fusion complex (EFC) presumably to avoid superinfection and syncytium formation. The protein is Superinfection exclusion protein (OPG040) of Vaccinia virus (strain Ankara) (VACV).